Here is an 882-residue protein sequence, read N- to C-terminus: DNA mismatch repair protein MutS (882 aa).

656–663 (GPNASGKS) contributes to the ATP binding site.

The protein belongs to the DNA mismatch repair MutS family.

Its function is as follows. This protein is involved in the repair of mismatches in DNA. It is possible that it carries out the mismatch recognition step. This protein has a weak ATPase activity. This Synechococcus sp. (strain ATCC 27144 / PCC 6301 / SAUG 1402/1) (Anacystis nidulans) protein is DNA mismatch repair protein MutS.